We begin with the raw amino-acid sequence, 476 residues long: uncharacterized protein (476 aa).

A run of 10 helical transmembrane segments spans residues 4-24 (FFSFINSVLWGSVMIYLLFGA), 81-101 (ALAITAGGPGAVFWMWVAAFI), 141-161 (WMGVLFAVFLLIAYGIIFSGV), 174-194 (FDFPPLVTGIILAVFTLLAIT), 207-227 (FVPLMAIIWVLTSLVICVMNI), 233-253 (VIWSIFESAFGWQEAAGGAAG), 300-320 (MIGIFIDTLVICTASAMLILL), 351-371 (FVTLVVILFAFSSIVANYIYA), 391-411 (ICTFATVIGGTLLSLPLMWQL), and 414-434 (IIMACMAITNLTAILLLSPVV).

It belongs to the alanine or glycine:cation symporter (AGCS) (TC 2.A.25) family.

The protein resides in the cell inner membrane. This is an uncharacterized protein from Escherichia coli (strain K12).